The following is a 97-amino-acid chain: ATP-dependent Clp protease adapter protein ClpS (97 aa).

It belongs to the ClpS family. Binds to the N-terminal domain of the chaperone ClpA.

Its function is as follows. Involved in the modulation of the specificity of the ClpAP-mediated ATP-dependent protein degradation. In Nautilia profundicola (strain ATCC BAA-1463 / DSM 18972 / AmH), this protein is ATP-dependent Clp protease adapter protein ClpS.